A 1200-amino-acid chain; its full sequence is MKVAGGLELGAAALLSASPRALVTLSTGPTCSILPKNPLFPQNLSSQPCIKMEGDKSLTFSSYGLQWCLYELDKEEFQTFKELLKKKSSESTTCSIPQFEIENANVECLALLLHEYYGASLAWATSISIFENMNLRTLSEKARDDMKRHSPEDPEATMTDQGPSKEKVPGISQAVQQDSATAAETKEQEISQAMEQEGATAAETEEQEISQAMEQEGATAAETEEQGHGGDTWDYKSHVMTKFAEEEDVRRSFENTAADWPEMQTLAGAFDSDRWGFRPRTVVLHGKSGIGKSALARRIVLCWAQGGLYQGMFSYVFFLPVREMQRKKESSVTEFISREWPDSQAPVTEIMSRPERLLFIIDGFDDLGSVLNNDTKLCKDWAEKQPPFTLIRSLLRKVLLPESFLIVTVRDVGTEKLKSEVVSPRYLLVRGISGEQRIHLLLERGIGEHQKTQGLRAIMNNRELLDQCQVPAVGSLICVALQLQDVVGESVAPFNQTLTGLHAAFVFHQLTPRGVVRRCLNLEERVVLKRFCRMAVEGVWNRKSVFDGDDLMVQGLGESELRALFHMNILLPDSHCEEYYTFFHLSLQDFCAALYYVLEGLEIEPALCPLYVEKTKRSMELKQAGFHIHSLWMKRFLFGLVSEDVRRPLEVLLGCPVPLGVKQKLLHWVSLLGQQPNATTPGDTLDAFHCLFETQDKEFVRLALNSFQEVWLPINQNLDLIASSFCLQHCPYLRKIRVDVKGIFPRDESAEACPVVPLWMRDKTLIEEQWEDFCSMLGTHPHLRQLDLGSSILTERAMKTLCAKLRHPTCKIQTLMFRNAQITPGVQHLWRIVMANRNLRSLNLGGTHLKEEDVRMACEALKHPKCLLESLRLDCCGLTHACYLKISQILTTSPSLKSLSLAGNKVTDQGVMPLSDALRVSQCALQKLILEDCGITATGCQSLASALVSNRSLTHLCLSNNSLGNEGVNLLCRSMRLPHCSLQRLMLNQCHLDTAGCGFLALALMGNSWLTHLSLSMNPVEDNGVKLLCEVMREPSCHLQDLELVKCHLTAACCESLSCVISRSRHLKSLDLTDNALGDGGVAALCEGLKQKNSVLARLGLKACGLTSDCCEALSLALSCNRHLTSLNLVQNNFSPKGMMKLCSAFACPTSNLQIIGLWKWQYPVQIRKLLEEVQLLKPRVVIDGSWHSFDEDDRYWWKN.

The Pyrin domain occupies 57 to 148 (SLTFSSYGLQ…SEKARDDMKR (92 aa)). Residues 142-152 (ARDDMKRHSPE) show a composition bias toward basic and acidic residues. A disordered region spans residues 142–232 (ARDDMKRHSP…TEEQGHGGDT (91 aa)). Residues 173 to 182 (QAVQQDSATA) show a composition bias toward polar residues. Composition is skewed to low complexity over residues 192-202 (QAMEQEGATAA) and 209-221 (ISQAMEQEGATAA). One can recognise an NACHT domain in the interval 280 to 602 (RTVVLHGKSG…ALYYVLEGLE (323 aa)). ATP is bound at residue 286-293 (GKSGIGKS). LRR repeat units follow at residues 704 to 727 (LNSFQEVWLPINQNLDLIASSFCL), 730 to 753 (CPYLRKIRVDVKGIFPRDESAEAC), 780 to 803 (HPHLRQLDLGSSILTERAMKTLCA), 809 to 832 (TCKIQTLMFRNAQITPGVQHLWRI), 836 to 863 (NRNLRSLNLGGTHLKEEDVRMACEALKH), 865 to 892 (KCLLESLRLDCCGLTHACYLKISQILTT), 893 to 916 (SPSLKSLSLAGNKVTDQGVMPLSD), 950 to 973 (NRSLTHLCLSNNSLGNEGVNLLCR), 979 to 1002 (HCSLQRLMLNQCHLDTAGCGFLAL), 1007 to 1034 (NSWLTHLSLSMNPVEDNGVKLLCEVMRE), 1036 to 1059 (SCHLQDLELVKCHLTAACCESLSC), 1064 to 1092 (SRHLKSLDLTDNALGDGGVAALCEGLKQK), and 1121 to 1142 (NRHLTSLNLVQNNFSPKGMMKL).

The protein belongs to the NLRP family. As to quaternary structure, component of the subcortical maternal complex (SCMC), at least composed of NLRP5, KHDC3, OOEP, and TLE6 isoform 1. Within the complex, interacts with OOEP, KHDC3L and TLE6. The SCMC may facilitate translocation of its components between the nuclear and cytoplasmic compartments. As part of the SCMC interacts with the SCMC-associated protein ZBED3. As part of the SCMC interacts with the SCMC-associated protein CFL1/Cofilin-1. Interacts with PRKCE. Interacts with TUBB3 at cytoskeleton microtubules. Phosphorylated by PRKCE. As to expression, expressed in cumulus cells (at protein level). Highly abundant in oocytes and early embryos, however poorly expressed in somatic tissues such as the liver and spinal cord.

The protein resides in the cytoplasm. Its subcellular location is the cytoplasmic vesicle. It localises to the secretory vesicle. The protein localises to the cortical granule. It is found in the mitochondrion. The protein resides in the nucleus. Its subcellular location is the nucleolus. It localises to the golgi apparatus. Component of the subcortical maternal complex (SCMC), a multiprotein complex that plays a key role in early embryonic development. The SCMC complex is a structural constituent of cytoplasmic lattices, which consist in fibrous structures found in the cytoplasm of oocytes and preimplantation embryos. They are required to store maternal proteins critical for embryonic development, such as proteins that control epigenetic reprogramming of the preimplantation embryo, and prevent their degradation or activation. Required for the localization of cortical granules to the cortex of oocytes, via association with the cortical actin scaffold. Required for cortical actin clearance prior to oocyte exocytosis and prevention of polyspermy. Involved in regulating post-fertilization Ca(2+) release and endoplasmic reticulum storage (ER) storage via regulation of cellular localization. May be involved in the localization of mitochondria to the cytoplasm and perinuclear region in oocytes and early stage embryos, independent of its role in CPL formation. This chain is NACHT, LRR and PYD domains-containing protein 5 (NLRP5), found in Homo sapiens (Human).